Here is a 457-residue protein sequence, read N- to C-terminus: Glutamate--tRNA ligase 2 (457 aa).

The 'HIGH' region motif lies at 8–18 (PSPTGYIHIGN). Positions 249-253 (GFSKR) match the 'KMSKS' region motif. Lys-252 is an ATP binding site.

Belongs to the class-I aminoacyl-tRNA synthetase family. Glutamate--tRNA ligase type 1 subfamily. Monomer.

It is found in the cytoplasm. It carries out the reaction tRNA(Glu) + L-glutamate + ATP = L-glutamyl-tRNA(Glu) + AMP + diphosphate. Functionally, catalyzes the attachment of glutamate to tRNA(Glu) in a two-step reaction: glutamate is first activated by ATP to form Glu-AMP and then transferred to the acceptor end of tRNA(Glu). This Bartonella tribocorum (strain CIP 105476 / IBS 506) protein is Glutamate--tRNA ligase 2.